Consider the following 500-residue polypeptide: uncharacterized protein (500 aa).

The chain crosses the membrane as a helical span at residues 27-47 (IFALILIVFGFIIAPLLPGIF).

It is found in the membrane. This is an uncharacterized protein from Borreliella burgdorferi (strain ATCC 35210 / DSM 4680 / CIP 102532 / B31) (Borrelia burgdorferi).